A 201-amino-acid polypeptide reads, in one-letter code: FMN-dependent NADH:quinone oxidoreductase (201 aa).

FMN is bound by residues S10, 16–18 (SQS), 96–99 (MYNF), and 140–143 (SRGG).

This sequence belongs to the azoreductase type 1 family. As to quaternary structure, homodimer. The cofactor is FMN.

The enzyme catalyses 2 a quinone + NADH + H(+) = 2 a 1,4-benzosemiquinone + NAD(+). It carries out the reaction N,N-dimethyl-1,4-phenylenediamine + anthranilate + 2 NAD(+) = 2-(4-dimethylaminophenyl)diazenylbenzoate + 2 NADH + 2 H(+). Its function is as follows. Quinone reductase that provides resistance to thiol-specific stress caused by electrophilic quinones. In terms of biological role, also exhibits azoreductase activity. Catalyzes the reductive cleavage of the azo bond in aromatic azo compounds to the corresponding amines. The chain is FMN-dependent NADH:quinone oxidoreductase from Cronobacter sakazakii (strain ATCC BAA-894) (Enterobacter sakazakii).